A 288-amino-acid polypeptide reads, in one-letter code: Prepilin leader peptidase/N-methyltransferase (288 aa).

A helical membrane pass occupies residues 14–34 (FITLATVLGLLVGSFLNVVVY). Zn(2+)-binding residues include cysteine 71, cysteine 74, cysteine 96, and cysteine 99. Transmembrane regions (helical) follow at residues 103-123 (ISVRYPLVEVGCALLSMVVAW), 127-147 (ASVEALVLLPLTWSLLALSLI), 158-178 (IVLPGLWLGLIVNYFGVWVPL), 182-202 (VCGAVVGYLSLWTVYWLFKLV), 227-247 (VLPLTLLLSSVLGALVGVYLL), and 254-274 (MGTAMPFGPYLAIAGWIAVLW).

Belongs to the peptidase A24 family. It depends on Zn(2+) as a cofactor.

It is found in the cell inner membrane. The catalysed reaction is Typically cleaves a -Gly-|-Phe- bond to release an N-terminal, basic peptide of 5-8 residues from type IV prepilin, and then N-methylates the new N-terminal amino group, the methyl donor being S-adenosyl-L-methionine.. Its function is as follows. Plays an essential role in type IV pili and type II pseudopili formation by proteolytically removing the leader sequence from substrate proteins and subsequently monomethylating the alpha-amino group of the newly exposed N-terminal phenylalanine. The protein is Prepilin leader peptidase/N-methyltransferase (pilD) of Pseudomonas putida (Arthrobacter siderocapsulatus).